The primary structure comprises 292 residues: N-acetylneuraminate lyase (292 aa).

The aceneuramate site is built by serine 47 and threonine 48. Tyrosine 136 acts as the Proton donor in catalysis. Lysine 164 functions as the Schiff-base intermediate with substrate in the catalytic mechanism. Aceneuramate contacts are provided by threonine 166, glycine 188, aspartate 190, glutamate 191, and serine 207.

Belongs to the DapA family. NanA subfamily. In terms of assembly, homotetramer.

The protein resides in the cytoplasm. It catalyses the reaction aceneuramate = aldehydo-N-acetyl-D-mannosamine + pyruvate. It participates in amino-sugar metabolism; N-acetylneuraminate degradation; D-fructose 6-phosphate from N-acetylneuraminate: step 1/5. Its function is as follows. Catalyzes the reversible aldol cleavage of N-acetylneuraminic acid (sialic acid; Neu5Ac) to form pyruvate and N-acetylmannosamine (ManNAc) via a Schiff base intermediate. This is N-acetylneuraminate lyase from Actinobacillus pleuropneumoniae serotype 5b (strain L20).